We begin with the raw amino-acid sequence, 663 residues long: UvrABC system protein B (663 aa).

Residues 1-10 (MIDKRDDKPF) are compositionally biased toward basic and acidic residues. Residues 1–23 (MIDKRDDKPFKLKSKYKPSGDQP) form a disordered region. Residues 31 to 271 (DNIEGGEKAQ…EQSIAKIQAE (241 aa)) form the Helicase ATP-binding domain. Position 44 to 51 (44 to 51 (GATGTGKT)) interacts with ATP. Residues 97-120 (YYDYYQPEAYVPSSDTYIEKDSSV) carry the Beta-hairpin motif. Positions 435–601 (QMDDLLGEIN…TIKKDIRGLI (167 aa)) constitute a Helicase C-terminal domain. Positions 627–662 (KEAINALQKQMQEAAELLDFELAAQMRDLILELKLM) constitute a UVR domain.

The protein belongs to the UvrB family. As to quaternary structure, forms a heterotetramer with UvrA during the search for lesions. Interacts with UvrC in an incision complex.

The protein localises to the cytoplasm. In terms of biological role, the UvrABC repair system catalyzes the recognition and processing of DNA lesions. A damage recognition complex composed of 2 UvrA and 2 UvrB subunits scans DNA for abnormalities. Upon binding of the UvrA(2)B(2) complex to a putative damaged site, the DNA wraps around one UvrB monomer. DNA wrap is dependent on ATP binding by UvrB and probably causes local melting of the DNA helix, facilitating insertion of UvrB beta-hairpin between the DNA strands. Then UvrB probes one DNA strand for the presence of a lesion. If a lesion is found the UvrA subunits dissociate and the UvrB-DNA preincision complex is formed. This complex is subsequently bound by UvrC and the second UvrB is released. If no lesion is found, the DNA wraps around the other UvrB subunit that will check the other stand for damage. The polypeptide is UvrABC system protein B (Streptococcus pyogenes serotype M2 (strain MGAS10270)).